Consider the following 368-residue polypeptide: D-alanine--D-alanine ligase (368 aa).

Positions 151–358 constitute an ATP-grasp domain; it reads KKLLAAEGLP…YGTLVSTLVD (208 aa). Residue 179 to 234 participates in ATP binding; sequence RSRLHLPVFVKPARGGSSIGITRVAEWAALDDAIAHARRHDPKVIVESGIAGREVE. Mg(2+) contacts are provided by Asp313, Glu325, and Asn327.

Belongs to the D-alanine--D-alanine ligase family. Requires Mg(2+) as cofactor. Mn(2+) is required as a cofactor.

It is found in the cytoplasm. It catalyses the reaction 2 D-alanine + ATP = D-alanyl-D-alanine + ADP + phosphate + H(+). It functions in the pathway cell wall biogenesis; peptidoglycan biosynthesis. In terms of biological role, cell wall formation. The polypeptide is D-alanine--D-alanine ligase (Rhodococcus opacus (strain B4)).